A 500-amino-acid polypeptide reads, in one-letter code: MEESLKPMDAEQLRENAHKMVDFIADYYKSIESFPVLSQVKPGYLRDLLPDSAPDHPESLEDVLEDIRQKIVPGVTHWQSPNYFAYYPSNSSVAGFLGEMISAGFNIVGFNWIASPAATELEVIVLDWLAKMLNLPNQFLSSGQGGGVIQGTASEANLVVLLAARDKFLNRFGKRSLEKLVVYASDQTHAAMKKACQIAGIYPENFRVLNADHTSNYALVPEALSDAISNDLSAGLIPFFLCATVGTTSSAAVDPLSELGKISKVNDMWFHVDAAYAGSACICPEYRHYIDGIEEAASFNMNAHKWFLTNFDCSLLWIKDRSALIQSLSTYPEYLKNKASQENSVVDFKDWQIPLGRRFRSLKLWMVLRLYGLENLQSYIRNHIKLAGQFEQLVCSDSRFEVVVPRTFSLVCFRLLPPPNHQDNGYKLNHSLLDAVNSSGKIFVSHTVLSGKYVIRFAVGAPLTEEEHIKQAWKVFQDQATILLAGSDGSDFGASNGDII.

Repeat copies occupy residues 65 to 122 (EDIR…TELE) and 125 to 176 (VLDW…GKRS). The segment at 65–176 (EDIRQKIVPG…KFLNRFGKRS (112 aa)) is 2 X approximate tandem repeats. Position 89 (Ser89) interacts with substrate. Positions 153 and 154 each coordinate pyridoxal 5'-phosphate. Substrate is bound at residue His189. Pyridoxal 5'-phosphate contacts are provided by Thr248 and Asn302. Lys305 carries the N6-(pyridoxal phosphate)lysine modification.

Belongs to the group II decarboxylase family. It depends on pyridoxal 5'-phosphate as a cofactor. In terms of tissue distribution, mostly expressed in bulbs, and, to a lower extent, in stems, roots, leaves and flowers.

The enzyme catalyses L-tyrosine + H(+) = tyramine + CO2. It participates in alkaloid biosynthesis. Functionally, catalyzes the decarboxylation of L-tyrosine to tyramine, which is converted to norbelladine, a precursor to all Amaryllidaceae alkaloids such as galanthamine, lycorine and haemanthamine, and including haemanthamine- and crinamine-type alkaloids, promising anticancer agents. The chain is Tyrosine decarboxylase 2 from Narcissus pseudonarcissus (Daffodil).